Here is a 1271-residue protein sequence, read N- to C-terminus: MDRGAAAAQGTAPPQDGEQPAESPEPPPPWPPPPPPPAPPPAPPLLSEASPEPIPEPCPELAPGPCPEATSESATELYTEPTPEPATEPASEPAPEPATEPAPEPATEPAPEPAPEPATESAPEPTPEPALESVPEPAPELTPEVAPELAPEPTPEPVTELAPEFCPEAAPEFRPSPAPCLLQCPVDTRERGLKTSPSPSPSPSPRTPMSWSRIKKILKEGPMLKNCNSFKRWKLRYFLVQGQKLYFAHHPAFAHFETIDLSQATVAESSCRNLCHSFCVITPQRKITLAAPNRKDMEEWINIIKTIQQGEIYKIPAAENNPFLVGMHCWYSSYSHRTQHCNVCRESIPALSRDAIICEVCKVKSHRLCALRASKDCKWNTLSITDDLLLPADEVNMPHQWVEGNMPVSSQCAVCHESCGSYQRLQDFRCLWCNSTVHDDCRRRFSKECCFRSHRSSVIPPTALSDPKGDGQLVVSSDFWNLDWSSACSCPLLIFINSKSGDHQGIVFLRKFKQYLNPSQVFDLLKGGPEAGLSMFKNFARFRILVCGGDGSVSWVLSLIDAFGLHEKCQLAVIPLGTGNDLARVLGWGAFWNKSKSPLDILNRVEQASVRILDRWSVMIRETPRQTPLLKGQVEMDVPRFEAAAIQHLESAATELNKILKAKYPTEMIIATRFLCSAVEDFVVDIVKAWGQIKQNNTAIVSVILKSDLMYDRLSVLIDVLAEEAAATSAEKSATEYADSSKADRKPFIPQIDHIAKCKLELATKAQSLQKSLKLIIFQVEQALDEESRQTISVKNFSSTFFLEDDPEDINQTSPRRRSRRGTLSSISSLKSEDLDNLNLDHLHFTPESIRFKEKCVMNNYFGIGLDAKISLDFNTRRDEHPGQYNSRLKNKMWYGLLGTKELLQRSYRKLEERVHLECDGETISLPNLQGIVVLNITSYAGGINFWGSNTATTEYEAPAIDDGKLEVVAIFGSVQMAMSRIINLHHHRIAQCHEVMITIDGEEGIPVQVDGEAWIQRPGLIKIRYKNAAQMLTRDRDFENSMKMWEYKHTEIQAAPQPQLDFQDSQESLSDEEYAQMQHLARLAENLISKLNDLSKIHQHVSVLMGSVNASANILNDIFYGQDSGNEMGAASCIPIETLSRNDAVDVTFSLKGLYDDTTAFLDEKLLRSAEDETALQSALDAMNKEFKKLSEIDWMNPIFVPEEKSSDTDSRSLRLKIKFPKLGKKKVEEERKPKSGQSVQSFIGNLWHRRHREDEAEGDDPLTPSRSQL.

Positions 1–15 (MDRGAAAAQGTAPPQ) are enriched in low complexity. Residues 1–160 (MDRGAAAAQG…PEPTPEPVTE (160 aa)) are disordered. Positions 23–44 (SPEPPPPWPPPPPPPAPPPAPP) are enriched in pro residues. 33 tandem repeats follow at residues 48–51 (EASP), 52–55 (EPIP), 56–59 (EPCP), 60–63 (ELAP), 64–67 (GPCP), 68–71 (EATS), 72–75 (ESAT), 76–79 (ELYT), 80–83 (EPTP), 84–87 (EPAT), 88–91 (EPAS), 92–95 (EPAP), 96–99 (EPAT), 100–103 (EPAP), 104–107 (EPAT), 108–111 (EPAP), 112–115 (EPAP), 116–119 (EPAT), 120–123 (ESAP), 124–127 (EPTP), 128–131 (EPAL), 132–135 (ESVP), 136–139 (EPAP), 140–143 (ELTP), 144–147 (EVAP), 148–151 (ELAP), 152–155 (EPTP), 156–159 (EPVT), 160–163 (ELAP), 164–167 (EFCP), 168–171 (EAAP), 172–175 (EFRP), and 176–179 (SPAP). The interval 48 to 179 (EASPEPIPEP…APEFRPSPAP (132 aa)) is 33 X 4 AA approximate tandem repeats of E-P-A-P. Residues 52–66 (EPIPEPCPELAPGPC) are compositionally biased toward pro residues. A Phosphotyrosine modification is found at Tyr-78. Residues 82–116 (TPEPATEPASEPAPEPATEPAPEPATEPAPEPAPE) are compositionally biased toward pro residues. Residues 139–149 (PELTPEVAPEL) are compositionally biased toward low complexity. The disordered stretch occupies residues 190 to 209 (ERGLKTSPSPSPSPSPRTPM). Residues 216–309 (KILKEGPMLK…WINIIKTIQQ (94 aa)) enclose the PH domain. 2 Phorbol-ester/DAG-type zinc fingers span residues 327 to 377 (MHCW…SKDC) and 398 to 449 (PHQW…SKEC). The DAGKc domain maps to 487 to 622 (ACSCPLLIFI…LDRWSVMIRE (136 aa)). Disordered regions lie at residues 805 to 825 (DDPEDINQTSPRRRSRRGTLS) and 1252 to 1271 (RHREDEAEGDDPLTPSRSQL). A required for localization to the plasma membrane region spans residues 1199 to 1268 (PIFVPEEKSS…EGDDPLTPSR (70 aa)).

This sequence belongs to the eukaryotic diacylglycerol kinase family. As to quaternary structure, does not form homooligomers. Phosphorylated at Tyr-78 by some member of the SRC family in response to H(2)O(2). In terms of tissue distribution, expressed in testis, and to a lesser extent in placenta.

The protein resides in the cell membrane. It catalyses the reaction a 1,2-diacyl-sn-glycerol + ATP = a 1,2-diacyl-sn-glycero-3-phosphate + ADP + H(+). The catalysed reaction is 1,2-di-(9Z-octadecenoyl)-sn-glycerol + ATP = 1,2-di-(9Z-octadecenoyl)-sn-glycero-3-phosphate + ADP + H(+). Its pathway is lipid metabolism; glycerolipid metabolism. Its activity is regulated as follows. Inhibited in response to H(2)O(2). Its function is as follows. Diacylglycerol kinase that converts diacylglycerol/DAG into phosphatidic acid/phosphatidate/PA and regulates the respective levels of these two bioactive lipids. Thereby, acts as a central switch between the signaling pathways activated by these second messengers with different cellular targets and opposite effects in numerous biological processes. The protein is Diacylglycerol kinase kappa of Homo sapiens (Human).